Reading from the N-terminus, the 442-residue chain is MSTRSKSVPVPAGGGAATVPLAVLLRREVVSEKTAAERPELQVGLFSQAKKGEDYTFLKPDCERLPGVPSSSFSAFGLFDGHNGNGAAIYTKENLLSNILTAIPADLNREDWLAALPRAMVAAFVKTDKDFQTKARSSGTTVTFVIIDGLFITVASVGDSRCVLEAEGSIYHLSADHRFDASKEEVDRVTESGGDVGRLNVVGGAEIGPLRCWPGGLCLSRSIGDQDVGQFIVPVPYVKQVKLSTAGGRLIISSDGVWDVLTAEVAFNCSRTLPPEAAAEQIVKEAVQQKGLRDDTTCIVVDILPDKANLTMPHTKKQPGMGVFKNMFRKKTPSDSSSHTDREYMDPDIVEEIFEDGCAFLSKRLDSEYPVRNMFKLFICAICQVELKPSQGISVHEDSSQPGNLRRWDGPFLCQGCQEKKEAMEGKRRSRDSSSRNSGSSE.

The PPM-type phosphatase domain occupies 35-303; that stretch reads AAERPELQVG…DDTTCIVVDI (269 aa). Mn(2+)-binding residues include Asp80, Gly81, Asp255, and Asp294. The span at 420–434 shows a compositional bias: basic and acidic residues; the sequence is KKEAMEGKRRSRDSS. The interval 420–442 is disordered; that stretch reads KKEAMEGKRRSRDSSSRNSGSSE.

Belongs to the PP2C family. The cofactor is Mg(2+). Mn(2+) serves as cofactor.

It catalyses the reaction O-phospho-L-seryl-[protein] + H2O = L-seryl-[protein] + phosphate. The enzyme catalyses O-phospho-L-threonyl-[protein] + H2O = L-threonyl-[protein] + phosphate. This Oryza sativa subsp. japonica (Rice) protein is Probable protein phosphatase 2C 15.